The chain runs to 400 residues: Nicotinate phosphoribosyltransferase (400 aa).

His-220 carries the phosphohistidine; by autocatalysis modification.

This sequence belongs to the NAPRTase family. In terms of processing, transiently phosphorylated on a His residue during the reaction cycle. Phosphorylation strongly increases the affinity for substrates and increases the rate of nicotinate D-ribonucleotide production. Dephosphorylation regenerates the low-affinity form of the enzyme, leading to product release.

The catalysed reaction is nicotinate + 5-phospho-alpha-D-ribose 1-diphosphate + ATP + H2O = nicotinate beta-D-ribonucleotide + ADP + phosphate + diphosphate. It participates in cofactor biosynthesis; NAD(+) biosynthesis; nicotinate D-ribonucleotide from nicotinate: step 1/1. Functionally, catalyzes the synthesis of beta-nicotinate D-ribonucleotide from nicotinate and 5-phospho-D-ribose 1-phosphate at the expense of ATP. In Escherichia coli O17:K52:H18 (strain UMN026 / ExPEC), this protein is Nicotinate phosphoribosyltransferase.